Reading from the N-terminus, the 193-residue chain is dCTP deaminase (193 aa).

DCTP is bound by residues 110-115 (RSSLAR), Asp-128, 136-138 (VLE), Tyr-171, Lys-178, and Gln-182. Catalysis depends on Glu-138, which acts as the Proton donor/acceptor.

This sequence belongs to the dCTP deaminase family. As to quaternary structure, homotrimer.

The enzyme catalyses dCTP + H2O + H(+) = dUTP + NH4(+). Its pathway is pyrimidine metabolism; dUMP biosynthesis; dUMP from dCTP (dUTP route): step 1/2. Its function is as follows. Catalyzes the deamination of dCTP to dUTP. In Aeromonas hydrophila subsp. hydrophila (strain ATCC 7966 / DSM 30187 / BCRC 13018 / CCUG 14551 / JCM 1027 / KCTC 2358 / NCIMB 9240 / NCTC 8049), this protein is dCTP deaminase.